Reading from the N-terminus, the 350-residue chain is Protein pelota homolog (350 aa).

It belongs to the eukaryotic release factor 1 family. Pelota subfamily. Monomer. Requires a divalent metal cation as cofactor.

It localises to the cytoplasm. Functionally, may function in recognizing stalled ribosomes, interact with stem-loop structures in stalled mRNA molecules, and effect endonucleolytic cleavage of the mRNA. May play a role in the release non-functional ribosomes and degradation of damaged mRNAs. Has endoribonuclease activity. This Methanosarcina mazei (strain ATCC BAA-159 / DSM 3647 / Goe1 / Go1 / JCM 11833 / OCM 88) (Methanosarcina frisia) protein is Protein pelota homolog.